A 427-amino-acid chain; its full sequence is Zinc finger protein 2 (427 aa).

Residues 14–85 form the KRAB domain; it reads VTFEDVAVTF…GFHGSEEKTW (72 aa). Residues 111–142 form a disordered region; sequence HRKQSSLCPKREIQTLTGGPEPEKESPKARTC. C2H2-type zinc fingers lie at residues 169–191, 197–219, 225–247, 253–275, 281–303, 309–331, 337–359, and 365–387; these read QECS…QRTH, YDCP…LMFH, YECD…QRIH, FKCN…QRIH, YECQ…LLTH, YECR…QKVH, YQCS…QKIH, and YECG…QRVH. Residues 393–415 form a C2H2-type 9; degenerate zinc finger; that stretch reads FECSVCGKEFSSKSSIIQHQRRY.

This sequence belongs to the krueppel C2H2-type zinc-finger protein family.

It is found in the nucleus. In terms of biological role, may be involved in transcriptional regulation. This chain is Zinc finger protein 2, found in Mus musculus (Mouse).